The primary structure comprises 714 residues: Polyribonucleotide nucleotidyltransferase (714 aa).

Residues Asp-487 and Asp-493 each contribute to the Mg(2+) site. Residues 554-613 (PRIEVLQIPTDKIRDVIGTGGKVIREIVEKTGAKINIEDDGTVKVASANGESIRAAIKWI) enclose the KH domain. The S1 motif domain maps to 623–691 (GQIYDGTVVK…DRGKVRLSMK (69 aa)).

It belongs to the polyribonucleotide nucleotidyltransferase family. Mg(2+) serves as cofactor.

It localises to the cytoplasm. The catalysed reaction is RNA(n+1) + phosphate = RNA(n) + a ribonucleoside 5'-diphosphate. Its function is as follows. Involved in mRNA degradation. Catalyzes the phosphorolysis of single-stranded polyribonucleotides processively in the 3'- to 5'-direction. This is Polyribonucleotide nucleotidyltransferase from Afipia carboxidovorans (strain ATCC 49405 / DSM 1227 / KCTC 32145 / OM5) (Oligotropha carboxidovorans).